The following is a 568-amino-acid chain: Pentatricopeptide repeat-containing protein At1g73400, mitochondrial (568 aa).

The transit peptide at Met1–Cys55 directs the protein to the mitochondrion. PPR repeat units follow at residues Glu233 to Arg263, Asp267 to Pro301, Glu302 to Val336, Thr340 to Pro374, Asp375 to Pro409, Asp410 to Pro444, Ser445 to Gln479, and Asp480 to Leu514.

Belongs to the PPR family. P subfamily.

The protein resides in the mitochondrion. This Arabidopsis thaliana (Mouse-ear cress) protein is Pentatricopeptide repeat-containing protein At1g73400, mitochondrial.